Consider the following 73-residue polypeptide: Conotoxin Lt9a (73 aa).

A signal peptide spans 1 to 23; that stretch reads MTLTKSAVLILVLLLAFDNFADV. A propeptide spanning residues 24–40 is cleaved from the precursor; that stretch reads QPGLITMGGGRLSNLLS. Intrachain disulfides connect Cys-48–Cys-62, Cys-53–Cys-64, and Cys-59–Cys-69.

It belongs to the conotoxin P superfamily. As to expression, expressed by the venom duct.

It localises to the secreted. Probable neurotoxin that inhibits ion channels. The sequence is that of Conotoxin Lt9a from Conus litteratus (Lettered cone).